We begin with the raw amino-acid sequence, 1501 residues long: Opaque-specific ABC transporter CDR3 (1501 aa).

The Cytoplasmic segment spans residues 1–502; sequence MAKTSQAEGQ…KRYWDRMRGD (502 aa). Positions 58-87 are disordered; it reads TYTTATMHPNGINPISDKTDPTLDPESPSF. Residues 140–395 form the ABC transporter 1 domain; that stretch reads KYARNIFNKF…FKKMGFVCQD (256 aa). The chain crosses the membrane as a helical span at residues 503-523; it reads IIVPLSTVAGNIAMALILSSV. N530 carries an N-linked (GlcNAc...) asparagine glycan. 5 consecutive transmembrane segments (helical) span residues 540–560, 589–609, 614–634, 653–673, and 755–775; these read VMYYALLFNAYSSVLEIYNMY, FPLKVVCSVLFNLILYFMVNF, GAFFFYLLISFCSTLFMSHLF, LLLFALSTFSGFAIPVTYMLG, and FGVLMAFIIFLFGTTIFFVQT. The Cytoplasmic segment spans residues 776–1175; it reads NKSSISKGET…LFQQYWRTPS (400 aa). An ABC transporter 2 domain is found at 840-1083; that stretch reads FHWRNLTYTV…LIEYFERNGA (244 aa). 876 to 883 lines the ATP pocket; the sequence is GASGAGKT. Transmembrane regions (helical) follow at residues 1176 to 1196, 1212 to 1232, 1261 to 1281, 1297 to 1317, 1325 to 1345, 1353 to 1375, and 1451 to 1471; these read YIYSKFAMAVLCSLFNGFTYY, IFSMFVVLTTLAQQYVPLFVT, IPYQVLAATISFFSWYYPVGL, LMWLIMTLMFIYSSTLAQFCI, YAANWISLLLTISMIFCGVIA, FWVFLYRCTPLTYLTSAMMSIGL, and GIFIVFIVFNMAATVFSYWLF.

It belongs to the ABC transporter superfamily. ABCG family. PDR (TC 3.A.1.205) subfamily.

The protein localises to the membrane. The protein is Opaque-specific ABC transporter CDR3 (CDR3) of Candida albicans (Yeast).